A 99-amino-acid polypeptide reads, in one-letter code: Integration host factor subunit alpha (99 aa).

Positions 49-75 are disordered; it reads FGNFDLRDKNQRPGRNPKTGEDIPITA.

This sequence belongs to the bacterial histone-like protein family. As to quaternary structure, heterodimer of an alpha and a beta chain.

In terms of biological role, this protein is one of the two subunits of integration host factor, a specific DNA-binding protein that functions in genetic recombination as well as in transcriptional and translational control. This is Integration host factor subunit alpha from Salmonella arizonae (strain ATCC BAA-731 / CDC346-86 / RSK2980).